We begin with the raw amino-acid sequence, 412 residues long: 2,3-bisphosphoglycerate-independent phosphoglycerate mutase (412 aa).

It belongs to the BPG-independent phosphoglycerate mutase family. A-PGAM subfamily.

The enzyme catalyses (2R)-2-phosphoglycerate = (2R)-3-phosphoglycerate. Its pathway is carbohydrate degradation; glycolysis; pyruvate from D-glyceraldehyde 3-phosphate: step 3/5. In terms of biological role, catalyzes the interconversion of 2-phosphoglycerate and 3-phosphoglycerate. This is 2,3-bisphosphoglycerate-independent phosphoglycerate mutase (apgM) from Pyrococcus horikoshii (strain ATCC 700860 / DSM 12428 / JCM 9974 / NBRC 100139 / OT-3).